A 207-amino-acid chain; its full sequence is Large ribosomal subunit protein uL4 (207 aa).

Residues 50 to 76 (AVKNRSAVSGGGRKPWKQKGTGRARQG) form a disordered region.

It belongs to the universal ribosomal protein uL4 family. In terms of assembly, part of the 50S ribosomal subunit.

Its function is as follows. One of the primary rRNA binding proteins, this protein initially binds near the 5'-end of the 23S rRNA. It is important during the early stages of 50S assembly. It makes multiple contacts with different domains of the 23S rRNA in the assembled 50S subunit and ribosome. In terms of biological role, forms part of the polypeptide exit tunnel. This Staphylococcus aureus (strain JH9) protein is Large ribosomal subunit protein uL4.